Reading from the N-terminus, the 179-residue chain is Protein PLASTID REDOX INSENSITIVE 2, chloroplastic (179 aa).

The transit peptide at 1 to 69 (MASMHEALFS…SLSRRGFVCR (69 aa)) directs the protein to the chloroplast.

As to quaternary structure, binds DNA when in complex with CSP41b.

The protein localises to the plastid. It is found in the chloroplast stroma. The protein resides in the chloroplast nucleoid. Involved in redox-mediated retrograde signaling to synchronize the expression of photosynthetic genes from both the nuclear and plastidic genomes, especially in excess light conditions. Required for full expression of genes transcribed by the plastid-encoded RNA polymerase (PEP). Essential for embryo development. The protein is Protein PLASTID REDOX INSENSITIVE 2, chloroplastic of Arabidopsis thaliana (Mouse-ear cress).